Here is a 344-residue protein sequence, read N- to C-terminus: Leucine-rich repeat-containing protein 75A (344 aa).

The interval 1–25 (MGTRQTKGSLAERASPGAAPGPRRE) is disordered. Positions 11–21 (AERASPGAAPG) are enriched in low complexity. 2 LRR repeats span residues 204–217 (VDSVELGFTGLTDD) and 229–242 (LPRLTTLALNGNRL). The interval 295-344 (LPTILELGEGPGSGEEVREGTVGQEDPGGGPVAPAEDHHEGKETVAAAQT) is disordered.

The protein belongs to the LRRC75 family.

This is Leucine-rich repeat-containing protein 75A (LRRC75A) from Homo sapiens (Human).